We begin with the raw amino-acid sequence, 182 residues long: MTFEQLIPLIIMAFALGMDAFSVSLGMGMMALKIRQILYIGVTIGIFHIIMPFIGMVLGRVLSEQYGDIAHFAGAILLIGLGFYIVYSSILENEETRTTPIGISLFVFAFGVSIDSFSVGLSLGIYGAQTIITILLFGFVSMLLAWTGLFIGRHAKGMLGTYGEIVGGIILVGFGLYLLFPI.

6 helical membrane-spanning segments follow: residues 6-26 (LIPLIIMAFALGMDAFSVSLG), 37-57 (ILYIGVTIGIFHIIMPFIGMV), 71-91 (HFAGAILLIGLGFYIVYSSIL), 101-121 (IGISLFVFAFGVSIDSFSVGL), 131-151 (IITILLFGFVSMLLAWTGLFI), and 162-182 (YGEIVGGIILVGFGLYLLFPI).

It belongs to the MntP (TC 9.B.29) family.

The protein resides in the cell membrane. In terms of biological role, probably functions as a manganese efflux pump. This is Putative manganese efflux pump MntP from Bacillus thuringiensis subsp. konkukian (strain 97-27).